The primary structure comprises 365 residues: Chorismate synthase (365 aa).

NADP(+) contacts are provided by Arg48 and Arg54. Residues 131–133 (RSS), 243–244 (NA), Gly288, 303–307 (KPTSS), and Arg329 each bind FMN.

It belongs to the chorismate synthase family. Homotetramer. FMNH2 serves as cofactor.

The enzyme catalyses 5-O-(1-carboxyvinyl)-3-phosphoshikimate = chorismate + phosphate. Its pathway is metabolic intermediate biosynthesis; chorismate biosynthesis; chorismate from D-erythrose 4-phosphate and phosphoenolpyruvate: step 7/7. Its function is as follows. Catalyzes the anti-1,4-elimination of the C-3 phosphate and the C-6 proR hydrogen from 5-enolpyruvylshikimate-3-phosphate (EPSP) to yield chorismate, which is the branch point compound that serves as the starting substrate for the three terminal pathways of aromatic amino acid biosynthesis. This reaction introduces a second double bond into the aromatic ring system. This is Chorismate synthase from Rhizobium leguminosarum bv. trifolii (strain WSM2304).